A 433-amino-acid chain; its full sequence is Homoserine dehydrogenase (433 aa).

NADPH is bound by residues Thr12, Val13, and Lys102. Val13 lines the NAD(+) pocket. NADP(+)-binding residues include Val13 and Lys102. Residues Glu126, Val129, Gly131, and Ile133 each contribute to the Na(+) site. The NADP(+) site is built by Gly184 and Glu187. L-homoserine contacts are provided by Glu187 and Asp198. Lys202 acts as the Proton donor in catalysis. Gly303 is a binding site for NADPH. Gly303 is a binding site for NAD(+). Gly303 contributes to the NADP(+) binding site. An ACT domain is found at 356 to 433 (YCRFLCADVP…EIPSVIRVLS (78 aa)).

It belongs to the homoserine dehydrogenase family. A metal cation is required as a cofactor.

It carries out the reaction L-homoserine + NADP(+) = L-aspartate 4-semialdehyde + NADPH + H(+). It catalyses the reaction L-homoserine + NAD(+) = L-aspartate 4-semialdehyde + NADH + H(+). It functions in the pathway amino-acid biosynthesis; L-methionine biosynthesis via de novo pathway; L-homoserine from L-aspartate: step 3/3. The protein operates within amino-acid biosynthesis; L-threonine biosynthesis; L-threonine from L-aspartate: step 3/5. Catalyzes the conversion of L-aspartate-beta-semialdehyde (L-Asa) to L-homoserine (L-Hse), the third step in the biosynthesis of threonine and methionine from aspartate. The chain is Homoserine dehydrogenase (hom) from Synechocystis sp. (strain ATCC 27184 / PCC 6803 / Kazusa).